Here is a 327-residue protein sequence, read N- to C-terminus: Probable serine/threonine-protein kinase WNK5 (327 aa).

A disordered region spans residues 1–48; it reads MPPNPTPPRRATTTTTRATSGVRRGEEEQGGMAVSASAGEEEEAFEEV. Residues 9–19 are compositionally biased toward low complexity; that stretch reads RRATTTTTRAT. Residues 39 to 48 are compositionally biased toward acidic residues; sequence GEEEEAFEEV. Positions 55–314 constitute a Protein kinase domain; it reads GRYADVLGLG…AAELLRDPFF (260 aa). Residue 136 to 139 participates in ATP binding; it reads TEVC. Residue Asp203 is the Proton acceptor of the active site.

Belongs to the protein kinase superfamily. Ser/Thr protein kinase family. WNK subfamily.

The enzyme catalyses L-seryl-[protein] + ATP = O-phospho-L-seryl-[protein] + ADP + H(+). The catalysed reaction is L-threonyl-[protein] + ATP = O-phospho-L-threonyl-[protein] + ADP + H(+). In Oryza sativa subsp. japonica (Rice), this protein is Probable serine/threonine-protein kinase WNK5 (WNK5).